The sequence spans 612 residues: 2-isopropylmalate synthase B (612 aa).

One can recognise a Pyruvate carboxyltransferase domain in the interval 71-344 (VRIFDTTLRD…YTGINTQHIL (274 aa)). Residues D80, H277, and N313 each contribute to the a divalent metal cation site.

Belongs to the alpha-IPM synthase/homocitrate synthase family. LeuA type 1 subfamily. As to quaternary structure, homodimer. It depends on a divalent metal cation as a cofactor.

The catalysed reaction is 3-methyl-2-oxobutanoate + acetyl-CoA + H2O = (2S)-2-isopropylmalate + CoA + H(+). Its pathway is amino-acid biosynthesis; L-leucine biosynthesis; L-leucine from 3-methyl-2-oxobutanoate: step 1/4. Its function is as follows. Catalyzes the condensation of the acetyl group of acetyl-CoA with 3-methyl-2-oxobutanoate (2-oxoisovalerate) to form 3-carboxy-3-hydroxy-4-methylpentanoate (2-isopropylmalate). This chain is 2-isopropylmalate synthase B (IPMSB), found in Solanum pennellii (Tomato).